A 2617-amino-acid polypeptide reads, in one-letter code: Non-reducing polyketide synthase epaA (2617 aa).

The tract at residues 95-231 (PNILLSPMVV…AARSISSLQQ (137 aa)) is N-terminal acylcarrier protein transacylase domain (SAT). Catalysis depends on cysteine 132, which acts as the Nucleophile; for transacylase activity. Catalysis depends on histidine 250, which acts as the Proton donor/acceptor; for transacylase activity. Residues 372-790 (PNEIAVIGMS…GSNASMVVAQ (419 aa)) enclose the Ketosynthase family 3 (KS3) domain. Active-site for beta-ketoacyl synthase activity residues include cysteine 539, histidine 674, and histidine 713. The segment at 902–1193 (FGGQISNYVG…ITSMASRALG (292 aa)) is malonyl-CoA:ACP transacylase (MAT) domain. Residues 1282 to 1413 (PKTLWSLIEA…GKLAFLSGQD (132 aa)) form an N-terminal hotdog fold region. One can recognise a PKS/mFAS DH domain in the interval 1282–1591 (PKTLWSLIEA…YHKVAKASMS (310 aa)). The segment at 1310-1589 (LVSGHVIANT…INYHKVAKAS (280 aa)) is product template (PT) domain. The active-site Proton acceptor; for dehydratase activity is the histidine 1314. Residues 1443–1591 (ADDIIQGRNI…YHKVAKASMS (149 aa)) are C-terminal hotdog fold. Aspartate 1499 serves as the catalytic Proton donor; for dehydratase activity. Residues 1600-1651 (TEAAPSSSTRAHPTSSSSPRLPGPSVPEDKSQNETQPAGTNAVAKKKSEKSA) are disordered. Low complexity predominate over residues 1602–1619 (AAPSSSTRAHPTSSSSPR). A Carrier domain is found at 1653 to 1727 (QNVLEKTRAL…GLVEYVQSAV (75 aa)). Serine 1687 bears the O-(pantetheine 4'-phosphoryl)serine mark. The disordered stretch occupies residues 1728 to 1799 (GVPTNGDEPD…PAMPPASSKT (72 aa)). The span at 1750 to 1766 (LAPSPSSSSSSTNLTED) shows a compositional bias: low complexity. Positions 1769–1785 (LDQAETTTNISSYPGQT) are enriched in polar residues. The interval 1970–2158 (DSLLNKLSYR…VGYGQVDWTD (189 aa)) is methyltransferase domain. The NADPH-binding (R) domain stretch occupies residues 2240 to 2485 (ITGATGSLGV…LCWTPVNDVA (246 aa)).

Requires pantetheine 4'-phosphate as cofactor.

It functions in the pathway secondary metabolite biosynthesis. Non-reducing polyketide synthase; part of the gene cluster that mediates the biosynthesis of nigerpyrone and its derivatives carbonarone A and pestalamide A. The biosynthesis pathway begins with the polyketide assembly by epaA to form phenylacetyl triketide precursor from successive condensation of two malonyl-CoA, presumably with one phenylacetyl-CoA starter unit produced by the phenylacetyl-CoA ligase epaB. For the nigerpyrone biosynthesis, the reactive polyketide chain is released as an aldehyde through the R-domain. A nonenzymatic cyclization and dehydration may create nigerpyrone. For the biosynthesis of carbonarone A and pestalamide A, an extra methyl group is added through the C-methyltransferase domain. Several further steps involving the dehydrogenase orf1, the cytochrome P450 monooxygenase orf2 and the FAD-dependent monooxygenase orf3 are required to form a carbonarone A precursor which is converted to carbonarone A via cyclization. The O-acetyltransferase epaC could catalyze the transfer of 2-methylsuccinyl-CoA, a common intermediate in the ethylmalonyl-CoA pathway, to generate the final product pestalamide A. This chain is Non-reducing polyketide synthase epaA, found in Aspergillus niger (strain ATCC MYA-4892 / CBS 513.88 / FGSC A1513).